Here is a 526-residue protein sequence, read N- to C-terminus: Glutamate--tRNA ligase, mitochondrial (526 aa).

A mitochondrion-targeting transit peptide spans 1–38; that stretch reads MLSYTSCAKLICSRYIVSKISFYSLKRCNSTAVVRTRF. 37-39 is an L-glutamate binding site; sequence RFA. Residues 42-50 carry the 'HIGH' region motif; that stretch reads PTGFLHLGS. His47 contributes to the ATP binding site. L-glutamate contacts are provided by residues Glu73, 222 to 226, and Arg240; that span reads YHFAN. ATP-binding positions include Glu243 and 278-282; that span reads KLSKR. The short motif at 278-282 is the 'KMSKS' region element; sequence KLSKR.

Belongs to the class-I aminoacyl-tRNA synthetase family. Glutamate--tRNA ligase type 1 subfamily.

It localises to the mitochondrion. The enzyme catalyses tRNA(Glu) + L-glutamate + ATP = L-glutamyl-tRNA(Glu) + AMP + diphosphate. In terms of biological role, catalyzes the attachment of glutamate to tRNA(Glu) in a two-step reaction: glutamate is first activated by ATP to form Glu-AMP and then transferred to the acceptor end of tRNA(Glu). In Schizosaccharomyces pombe (strain 972 / ATCC 24843) (Fission yeast), this protein is Glutamate--tRNA ligase, mitochondrial (mse1).